Reading from the N-terminus, the 472-residue chain is Glutamate--tRNA ligase 2 (472 aa).

The short motif at 12–22 (PSPSGLLHLGN) is the 'HIGH' region element. The 'KMSKS' region signature appears at 253–257 (PLSKR). Position 256 (Lys256) interacts with ATP.

Belongs to the class-I aminoacyl-tRNA synthetase family. Glutamate--tRNA ligase type 1 subfamily. As to quaternary structure, monomer.

It is found in the cytoplasm. It carries out the reaction tRNA(Glu) + L-glutamate + ATP = L-glutamyl-tRNA(Glu) + AMP + diphosphate. Its function is as follows. Catalyzes the attachment of glutamate to tRNA(Glu) in a two-step reaction: glutamate is first activated by ATP to form Glu-AMP and then transferred to the acceptor end of tRNA(Glu). The sequence is that of Glutamate--tRNA ligase 2 from Nitrosococcus oceani (strain ATCC 19707 / BCRC 17464 / JCM 30415 / NCIMB 11848 / C-107).